The sequence spans 50 residues: Small ribosomal subunit protein uS14 (50 aa).

Zn(2+)-binding residues include Cys15, Cys18, Cys33, and Cys36.

The protein belongs to the universal ribosomal protein uS14 family. Zinc-binding uS14 subfamily. Part of the 30S ribosomal subunit. Requires Zn(2+) as cofactor.

Binds 16S rRNA, required for the assembly of 30S particles. This Methanothermobacter thermautotrophicus (strain ATCC 29096 / DSM 1053 / JCM 10044 / NBRC 100330 / Delta H) (Methanobacterium thermoautotrophicum) protein is Small ribosomal subunit protein uS14.